Reading from the N-terminus, the 201-residue chain is Ribonuclease HII (201 aa).

The RNase H type-2 domain maps to 10-200 (LIEAGCDEAG…LGTDPQLEIP (191 aa)). The a divalent metal cation site is built by aspartate 16, glutamate 17, and aspartate 108.

The protein belongs to the RNase HII family. Mn(2+) is required as a cofactor. Requires Mg(2+) as cofactor.

It localises to the cytoplasm. It carries out the reaction Endonucleolytic cleavage to 5'-phosphomonoester.. Functionally, endonuclease that specifically degrades the RNA of RNA-DNA hybrids. This chain is Ribonuclease HII, found in Phocaeicola vulgatus (strain ATCC 8482 / DSM 1447 / JCM 5826 / CCUG 4940 / NBRC 14291 / NCTC 11154) (Bacteroides vulgatus).